The primary structure comprises 157 residues: SsrA-binding protein (157 aa).

Residues 128–157 form a disordered region; the sequence is LARGKKQHDKRAAEKERDWEREKQRVMRRG. Over residues 137–157 the composition is skewed to basic and acidic residues; that stretch reads KRAAEKERDWEREKQRVMRRG.

It belongs to the SmpB family.

It is found in the cytoplasm. Its function is as follows. Required for rescue of stalled ribosomes mediated by trans-translation. Binds to transfer-messenger RNA (tmRNA), required for stable association of tmRNA with ribosomes. tmRNA and SmpB together mimic tRNA shape, replacing the anticodon stem-loop with SmpB. tmRNA is encoded by the ssrA gene; the 2 termini fold to resemble tRNA(Ala) and it encodes a 'tag peptide', a short internal open reading frame. During trans-translation Ala-aminoacylated tmRNA acts like a tRNA, entering the A-site of stalled ribosomes, displacing the stalled mRNA. The ribosome then switches to translate the ORF on the tmRNA; the nascent peptide is terminated with the 'tag peptide' encoded by the tmRNA and targeted for degradation. The ribosome is freed to recommence translation, which seems to be the essential function of trans-translation. The protein is SsrA-binding protein of Methylococcus capsulatus (strain ATCC 33009 / NCIMB 11132 / Bath).